The sequence spans 143 residues: Large ribosomal subunit protein uL13 (143 aa).

It belongs to the universal ribosomal protein uL13 family. In terms of assembly, part of the 50S ribosomal subunit.

Functionally, this protein is one of the early assembly proteins of the 50S ribosomal subunit, although it is not seen to bind rRNA by itself. It is important during the early stages of 50S assembly. In Desulfitobacterium hafniense (strain Y51), this protein is Large ribosomal subunit protein uL13.